Here is a 616-residue protein sequence, read N- to C-terminus: tRNA 5-methylaminomethyl-2-thiouridine biosynthesis bifunctional protein MnmC (616 aa).

Positions 1 to 232 are tRNA (mnm(5)s(2)U34)-methyltransferase; it reads MLRTIVPARL…KRHCMSARFA (232 aa). An FAD-dependent cmnm(5)s(2)U34 oxidoreductase region spans residues 249-616; the sequence is IGGGVAGAAA…ARFAGNRKTA (368 aa).

This sequence in the N-terminal section; belongs to the methyltransferase superfamily. tRNA (mnm(5)s(2)U34)-methyltransferase family. It in the C-terminal section; belongs to the DAO family. FAD serves as cofactor.

It localises to the cytoplasm. It carries out the reaction 5-aminomethyl-2-thiouridine(34) in tRNA + S-adenosyl-L-methionine = 5-methylaminomethyl-2-thiouridine(34) in tRNA + S-adenosyl-L-homocysteine + H(+). Its function is as follows. Catalyzes the last two steps in the biosynthesis of 5-methylaminomethyl-2-thiouridine (mnm(5)s(2)U) at the wobble position (U34) in tRNA. Catalyzes the FAD-dependent demodification of cmnm(5)s(2)U34 to nm(5)s(2)U34, followed by the transfer of a methyl group from S-adenosyl-L-methionine to nm(5)s(2)U34, to form mnm(5)s(2)U34. The polypeptide is tRNA 5-methylaminomethyl-2-thiouridine biosynthesis bifunctional protein MnmC (Thiobacillus denitrificans (strain ATCC 25259 / T1)).